A 78-amino-acid polypeptide reads, in one-letter code: RNA-binding protein Hfq (78 aa).

The Sm domain maps to 10–69 (DPFLNTLRKEHVPVSIYLVNGIKLQGQIESFDQYVVLLRNTVTQMVYKHAISTVVPARAV).

It belongs to the Hfq family. Homohexamer.

In terms of biological role, RNA chaperone that binds small regulatory RNA (sRNAs) and mRNAs to facilitate mRNA translational regulation in response to envelope stress, environmental stress and changes in metabolite concentrations. Also binds with high specificity to tRNAs. The sequence is that of RNA-binding protein Hfq from Bordetella bronchiseptica (strain ATCC BAA-588 / NCTC 13252 / RB50) (Alcaligenes bronchisepticus).